Consider the following 362-residue polypeptide: Bifunctional chorismate mutase/prephenate dehydratase (362 aa).

Positions methionine 1 to lysine 92 constitute a Chorismate mutase domain. The substrate site is built by arginine 8, arginine 25, lysine 36, and glutamate 49. Positions valine 93–lysine 267 constitute a Prephenate dehydratase domain. In terms of domain architecture, ACT spans serine 279–proline 356.

It localises to the cytoplasm. The enzyme catalyses chorismate = prephenate. It catalyses the reaction prephenate + H(+) = 3-phenylpyruvate + CO2 + H2O. The protein operates within amino-acid biosynthesis; L-phenylalanine biosynthesis; phenylpyruvate from prephenate: step 1/1. It functions in the pathway metabolic intermediate biosynthesis; prephenate biosynthesis; prephenate from chorismate: step 1/1. Its function is as follows. Catalyzes the Claisen rearrangement of chorismate to prephenate and the decarboxylation/dehydration of prephenate to phenylpyruvate. This chain is Bifunctional chorismate mutase/prephenate dehydratase (pheA), found in Aquifex aeolicus (strain VF5).